The primary structure comprises 88 residues: Cell division topological specificity factor (88 aa).

It belongs to the MinE family.

In terms of biological role, prevents the cell division inhibition by proteins MinC and MinD at internal division sites while permitting inhibition at polar sites. This ensures cell division at the proper site by restricting the formation of a division septum at the midpoint of the long axis of the cell. This Pseudoalteromonas translucida (strain TAC 125) protein is Cell division topological specificity factor.